The following is a 376-amino-acid chain: Probable ureide permease A3 (376 aa).

Topologically, residues 1 to 9 (HLVESKGGA) are extracellular. Residues 10–30 (IACMFLALFFLGTWPALLTML) form a helical membrane-spanning segment. Over 31 to 41 (ERRGRLPQHTY) the chain is Cytoplasmic. A helical transmembrane segment spans residues 42–62 (LDYSITNFFAALLIAFTFGEI). Topologically, residues 63–80 (GKGKPDEPNFLAQLAQDN) are extracellular. The chain crosses the membrane as a helical span at residues 81 to 101 (WPSVLFAMGGGVVLSLGNLSS). Topologically, residues 102-103 (QY) are cytoplasmic. Residues 104–124 (AFAFVGLSVTEVITASITVVI) form a helical membrane-spanning segment. Residues 125–137 (GTTLNYFLDDKIN) lie on the Extracellular side of the membrane. The chain crosses the membrane as a helical span at residues 138–158 (KAEILFPGVGCFLIAVFLGFC). Residues 159–231 (RFNSSNASDN…RAIKVFGKST (73 aa)) are Cytoplasmic-facing. 223–230 (AIKVFGKS) is a binding site for ATP. Residues 232 to 252 (LIGLALTFSAGLCFSMFSPAF) form a helical membrane-spanning segment. At 253–274 (NLATNDQWHTLPNGIPHLTVYT) the chain is on the extracellular side. Residues 275-295 (AFFYFSISCFVIAIILNITFL) traverse the membrane as a helical segment. At 296-317 (YHPVLNLPKSSLKAYLADSDGR) the chain is on the cytoplasmic side. The helical transmembrane segment at 318 to 338 (IWALLAGLLCGFGNSLQFMGG) threads the bilayer. Over 339 to 376 (QAAGYQQQSLCRHFLCKHFWGVLLFGEYRRSSRKTYIC) the chain is Extracellular.

It belongs to the plant ureide permease (TC 2.A.7.19) family.

It localises to the membrane. Functionally, transports a wide spectrum of oxo derivatives of heterocyclic nitrogen compounds. This is Probable ureide permease A3 (A3) from Vigna unguiculata (Cowpea).